Reading from the N-terminus, the 445-residue chain is UPF0210 protein SSA_2018 (445 aa).

The protein belongs to the UPF0210 family. Homodimer.

The polypeptide is UPF0210 protein SSA_2018 (Streptococcus sanguinis (strain SK36)).